The following is a 201-amino-acid chain: uncharacterized protein (201 aa).

The next 4 membrane-spanning stretches (helical) occupy residues 9–29 (YNVF…ILVA), 42–62 (FLFV…FFDV), 86–106 (SGVI…VVMV), and 126–146 (LPYL…SIGM). Composition is skewed to basic and acidic residues over residues 165 to 174 (EPTDPNKTDN) and 182 to 191 (DENKKNEKEQ). Residues 165–201 (EPTDPNKTDNRAVVINLDENKKNEKEQSPPSAEMTSL) form a disordered region. Polar residues predominate over residues 192-201 (SPPSAEMTSL).

It is found in the cell membrane. This is an uncharacterized protein from Mycoplasma genitalium (strain ATCC 33530 / DSM 19775 / NCTC 10195 / G37) (Mycoplasmoides genitalium).